Reading from the N-terminus, the 213-residue chain is 24 kDa ookinete surface protein (213 aa).

The signal sequence occupies residues 1–28 (MNFKYSFIFLFFIQLAIRYNNAKITVDT). Residues 30–59 (CKGGKLIQMSNHYECKCPSGYALKTENTCE) form the EGF-like 1; truncated domain. EGF-like domains are found at residues 60–108 (PIVK…NICK) and 108–148 (KPTR…GKCT). 6 disulfides stabilise this stretch: Cys-64–Cys-80, Cys-74–Cys-94, Cys-96–Cys-107, Cys-112–Cys-122, Cys-117–Cys-134, and Cys-136–Cys-147. Residues 151-175 (GETKCLLKCKAAEECKLTGKHYECV) enclose the EGF-like 4; truncated domain. Asn-190 is lipidated: GPI-anchor amidated asparagine. The N-linked (GlcNAc...) asparagine glycan is linked to Asn-190. Residues 191–213 (SSFMNGMSIISIIALLVIYVIVM) constitute a propeptide, removed in mature form.

It localises to the cell membrane. The polypeptide is 24 kDa ookinete surface protein (Plasmodium berghei (strain Anka)).